Here is a 979-residue protein sequence, read N- to C-terminus: Oncostatin-M-specific receptor subunit beta (979 aa).

The first 27 residues, Met1–Ala27, serve as a signal peptide directing secretion. Residues Glu28 to Met740 lie on the Extracellular side of the membrane. Asn163 is a glycosylation site (N-linked (GlcNAc...) asparagine). A disulfide bridge connects residues Cys245 and Cys255. N-linked (GlcNAc...) asparagine glycans are attached at residues Asn326 and Asn380. 4 consecutive Fibronectin type-III domains span residues Asn335–Ala428, Ala433–Asn528, Lys529–Leu623, and Pro625–Glu736. The short motif at Trp415–Ser419 is the WSXWS motif element. Residues Asn446 and Asn580 are each glycosylated (N-linked (GlcNAc...) asparagine). Residues Leu741–Leu761 form a helical membrane-spanning segment. The Cytoplasmic portion of the chain corresponds to Lys762–Cys979. The Box 1 motif signature appears at Cys770 to Tyr778. Phosphoserine is present on residues Ser826 and Ser889.

It belongs to the type I cytokine receptor family. Type 2 subfamily. As to quaternary structure, heterodimer composed of OSMR and IL6ST (type II OSM receptor). Heterodimer with IL31RA to form the IL31 receptor. In terms of tissue distribution, expressed in keratinocytes (at protein level). Expressed at relatively high levels in all neural cells as well as fibroblast and epithelial cells.

The protein localises to the membrane. Its function is as follows. Associates with IL31RA to form the IL31 receptor. Binds IL31 to activate STAT3 and possibly STAT1 and STAT5. Capable of transducing OSM-specific signaling events. The chain is Oncostatin-M-specific receptor subunit beta (OSMR) from Homo sapiens (Human).